The following is a 145-amino-acid chain: UPF0310 protein Mvan_0064 (145 aa).

This sequence belongs to the UPF0310 family.

The chain is UPF0310 protein Mvan_0064 from Mycolicibacterium vanbaalenii (strain DSM 7251 / JCM 13017 / BCRC 16820 / KCTC 9966 / NRRL B-24157 / PYR-1) (Mycobacterium vanbaalenii).